The sequence spans 394 residues: 1-deoxy-D-xylulose 5-phosphate reductoisomerase (394 aa).

NADPH is bound by residues Thr11, Gly12, Ser13, Ile14, Gly37, Asn39, and Asn126. Lys127 contacts 1-deoxy-D-xylulose 5-phosphate. Glu128 contributes to the NADPH binding site. Position 152 (Asp152) interacts with Mn(2+). 1-deoxy-D-xylulose 5-phosphate contacts are provided by Ser153, Glu154, Ser178, and His201. Glu154 is a binding site for Mn(2+). Gly207 is a binding site for NADPH. 1-deoxy-D-xylulose 5-phosphate is bound by residues Ser214, Asn219, Lys220, and Glu223. A Mn(2+)-binding site is contributed by Glu223.

It belongs to the DXR family. Mg(2+) is required as a cofactor. The cofactor is Mn(2+).

The catalysed reaction is 2-C-methyl-D-erythritol 4-phosphate + NADP(+) = 1-deoxy-D-xylulose 5-phosphate + NADPH + H(+). Its pathway is isoprenoid biosynthesis; isopentenyl diphosphate biosynthesis via DXP pathway; isopentenyl diphosphate from 1-deoxy-D-xylulose 5-phosphate: step 1/6. Catalyzes the NADPH-dependent rearrangement and reduction of 1-deoxy-D-xylulose-5-phosphate (DXP) to 2-C-methyl-D-erythritol 4-phosphate (MEP). The polypeptide is 1-deoxy-D-xylulose 5-phosphate reductoisomerase (Synechocystis sp. (strain ATCC 27184 / PCC 6803 / Kazusa)).